The sequence spans 364 residues: MSLQSIKYSRGSLEILDQLLLPGQSKYVVVRGVEDGWKVINKMQVRGAPAIAIVGCLSLAVEINPEDFENKKSLRQEIEGKLNYLVSARPTAVNMKIAADELITLANELYKDEATDVTQMKHRFLDATEAMLKKDIADNRAIGANGAQAILQRVAKAGKTPAGSTGSVRVLTHCNTGSLATAGYGTALGVVRQLAELGKLEHVYCTETRPYNQGARLTAYELVHEKFPATLVLDSMVAALLRAKNVAAVVVGADRVASNGDTANKIGTYQIAVVAKHHDVPFYVAAPLTSIDLAIPGGDHIIIEERPDREMTHVGEHRIAAPGINCWNPAFDVTPASLITGIITERGVFKPAELKEAITKLLES.

Asp-254 (proton donor) is an active-site residue.

This sequence belongs to the eIF-2B alpha/beta/delta subunits family. MtnA subfamily.

It localises to the cytoplasm. Its subcellular location is the nucleus. It catalyses the reaction 5-(methylsulfanyl)-alpha-D-ribose 1-phosphate = 5-(methylsulfanyl)-D-ribulose 1-phosphate. It functions in the pathway amino-acid biosynthesis; L-methionine biosynthesis via salvage pathway; L-methionine from S-methyl-5-thio-alpha-D-ribose 1-phosphate: step 1/6. In terms of biological role, catalyzes the interconversion of methylthioribose-1-phosphate (MTR-1-P) into methylthioribulose-1-phosphate (MTRu-1-P). The polypeptide is Methylthioribose-1-phosphate isomerase (Drosophila simulans (Fruit fly)).